Reading from the N-terminus, the 946-residue chain is MDAGFFRGTSAEQDNRFSNKQKKLLKQLKFAECLEKKVDMSKVNLEVIKPWITKRVTEILGFEDDVVIEFIFNQLEVKNPDSKMMQINLTGFLNGKNAREFMGELWPLLLSAQENIAGIPSAFLELKKEEIKQRQIEQEKLASLKKQDEDKDKRDKEEKESSREKRERSRSPRRRKSRSPSPRRRSSPVRRERKRSHSRSPRHRTKSRSPSPAPEKKEKSPELPEPSVRMKDSSVQEATSTSDILKAPKPEPVPEPKEPSPEKNSKKEKEKTRPRSRSRSKSRSRTRSRSPSHTRPRRRHRSRSRSYSPRRRPSPRRRPSPRRRTPPRRMPPPPRHRRSRSPGRRRRRSSASLSGSSSSSSSSRSRSPPKKPPKRTSSPPRKTRRLSPSASPPRRRHRPSSPATPPPKTRHSPTPQQSNRTRKSRVSVSPGRTSGKVTKHKGTEKRESPSPAPKPRKVELSESEEDKGSKMAAADSVQQRRQYRRQNQQSSSDSGSSSTSEDERPKRSHVKNGEVGRRRRHSPSRSASPSPRKRQKETSPRMQMGKRWQSPVTKSSRRRRSPSPPPARRRRSPSPAPPPPPPPPPPRRRRSPTPPPRRRTPSPPPRRRSPSPRRYSPPIQRRYSPSPPPKRRTASPPPPPKRRASPSPPPKRRVSHSPPPKQRSPTVTKRRSPSLSSKHRKGSSPGRSTREARSPQPNKRHSPSPRPRAPQTSSPPPVRRGASASPQGRQSPSPSTRPIRRVSRTPEPKKIKKTAMATQRNIRRVSKSPKADSLSRAASPSPQSVRRVSSSRSVSGSPEPAAKKPPAPPSPVQSQSPSTNWSPAVPAKKAKSPTPSLSPARNSDQEGGGKKKKKKKDKKHKKDKKHKKHKKHKKEKAVTIATPATAAPAAVSAATTTSAQEEPAAAPEPRKETESEAEDDNLDDLERHLREKALRSMRKAQVSPQS.

At M1 the chain carries N-acetylmethionine. The tract at residues 1-151 (MDAGFFRGTS…ASLKKQDEDK (151 aa)) is necessary for DNA and RNA-binding. The necessary for mRNA 3'-end cleavage and cytoplasmic accumulation stretch occupies residues 1–156 (MDAGFFRGTS…QDEDKDKRDK (156 aa)). At R7 the chain carries Citrulline. A PWI domain is found at 27 to 126 (QLKFAECLEK…AGIPSAFLEL (100 aa)). K127 participates in a covalent cross-link: Glycyl lysine isopeptide (Lys-Gly) (interchain with G-Cter in SUMO2). Position 140 is an N6-acetyllysine (K140). Residues 142–170 (ASLKKQDEDKDKRDKEEKESSREKRERSR) are compositionally biased toward basic and acidic residues. The segment at 142-946 (ASLKKQDEDK…MRKAQVSPQS (805 aa)) is disordered. Over residues 171-207 (SPRRRKSRSPSPRRRSSPVRRERKRSHSRSPRHRTKS) the composition is skewed to basic residues. Over residues 214–234 (PEKKEKSPELPEPSVRMKDSS) the composition is skewed to basic and acidic residues. A phosphoserine mark is found at S220 and S227. K231 is covalently cross-linked (Glycyl lysine isopeptide (Lys-Gly) (interchain with G-Cter in SUMO1); alternate). K231 is covalently cross-linked (Glycyl lysine isopeptide (Lys-Gly) (interchain with G-Cter in SUMO2); alternate). Phosphoserine occurs at positions 234 and 240. Phosphothreonine is present on T241. Over residues 246 to 273 (KAPKPEPVPEPKEPSPEKNSKKEKEKTR) the composition is skewed to basic and acidic residues. K249 participates in a covalent cross-link: Glycyl lysine isopeptide (Lys-Gly) (interchain with G-Cter in SUMO2). S260 is subject to Phosphoserine. Basic residues-rich tracts occupy residues 274–327 (PRSR…RTPP) and 334–349 (PRHR…RRRS). Residues 298–707 (RRHRSRSRSY…NKRHSPSPRP (410 aa)) are necessary for speckles and matrix localization. Residues 350 to 366 (SASLSGSSSSSSSSRSR) are compositionally biased toward low complexity. Residues S387, S389, S391, and S400 each carry the phosphoserine modification. Position 404 is a phosphothreonine (T404). S412 is modified (phosphoserine). Residue T414 is modified to Phosphothreonine. Residues S418, S427, S429, and S434 each carry the phosphoserine modification. A compositionally biased stretch (polar residues) spans 426 to 436 (VSVSPGRTSGK). K445 is covalently cross-linked (Glycyl lysine isopeptide (Lys-Gly) (interchain with G-Cter in SUMO2)). Residues S448 and S450 each carry the phosphoserine modification. Residue K457 forms a Glycyl lysine isopeptide (Lys-Gly) (interchain with G-Cter in SUMO2) linkage. Phosphoserine is present on residues S461 and S463. Residue K470 forms a Glycyl lysine isopeptide (Lys-Gly) (interchain with G-Cter in SUMO2) linkage. Residue S476 is modified to Phosphoserine. Over residues 476–499 (SVQQRRQYRRQNQQSSSDSGSSST) the composition is skewed to low complexity. Basic and acidic residues predominate over residues 501–516 (EDERPKRSHVKNGEVG). Phosphoserine occurs at positions 522, 524, 526, 528, 530, 561, 563, 572, and 574. Residues 555-572 (SSRRRRSPSPPPARRRRS) are compositionally biased toward basic residues. Pro residues predominate over residues 574 to 585 (SPAPPPPPPPPP). Over residues 586 to 611 (PRRRRSPTPPPRRRTPSPPPRRRSPS) the composition is skewed to basic residues. Residues T593 and T600 each carry the phosphothreonine modification. S602 is subject to Phosphoserine. The span at 612-624 (PRRYSPPIQRRYS) shows a compositional bias: low complexity. Residue Y615 is modified to Phosphotyrosine. Phosphoserine occurs at positions 616, 624, and 626. T633 bears the Phosphothreonine mark. Phosphoserine is present on residues S635, S645, S647, S655, and S657. The segment covering 640–655 (PKRRASPSPPPKRRVS) has biased composition (basic residues). Residues 668-682 (TKRRSPSLSSKHRKG) are compositionally biased toward basic residues. Pro residues predominate over residues 704 to 718 (SPRPRAPQTSSPPPV). A phosphoserine mark is found at S713, S714, S723, S725, S731, and S733. Residues 724-736 (ASPQGRQSPSPST) are compositionally biased toward polar residues. T736 carries the post-translational modification Phosphothreonine. S779, S781, S789, S793, S795, S797, S810, S814, S816, and S818 each carry phosphoserine. Residues 779-800 (SPSPQSVRRVSSSRSVSGSPEP) show a composition bias toward low complexity. Position 819 is a phosphothreonine (T819). Phosphoserine is present on residues S822 and S832. Over residues 833–842 (PTPSLSPARN) the composition is skewed to polar residues. T834 is subject to Phosphothreonine. Phosphoserine is present on residues S836, S838, and S843. The segment covering 850–875 (KKKKKKKDKKHKKDKKHKKHKKHKKE) has biased composition (basic residues). Residues 878-907 (VTIATPATAAPAAVSAATTTSAQEEPAAAP) are compositionally biased toward low complexity. Position 913 is a phosphothreonine (T913). Position 915 is a phosphoserine (S915). Residues 924–934 (DLERHLREKAL) show a composition bias toward basic and acidic residues. S943 carries the phosphoserine modification.

The protein belongs to the splicing factor SR family. In terms of assembly, identified in the spliceosome C complex. Found in a pre-mRNA splicing complex with SFRS4, SFRS5, SNRP70, SNRPA1, SRRM1 and SRRM2. Component of the minor spliceosome, which splices U12-type introns. Found in a pre-mRNA exonic splicing enhancer (ESE) complex with SNRP70, SNRPA1, SRRM1 and TRA2B/SFRS10. Found in a mRNA splicing-dependent exon junction complex (EJC) with DEK, PRPF8, NCBP1, RBM8A, RNPS1, SRRM1 and ALYREF/THOC4. Interacts with DDX39B, CPSF1, RBM8A, RNPS1, and ALYREF/THOC4. Seems to be a compound of RNA export complexes that are released from speckles in a ATP-dependent manner. Post-translationally, citrullinated by PADI4. Phosphorylated on multiple serine and threonine residues by DYRK3 during the G2-to-M transition, after the nuclear-envelope breakdown. Phosphorylation by DYRK3 promotes disassembly of nuclear speckles.

It localises to the nucleus matrix. The protein localises to the nucleus speckle. Part of pre- and post-splicing multiprotein mRNP complexes. As a component of the minor spliceosome, involved in the splicing of U12-type introns in pre-mRNAs. Involved in numerous pre-mRNA processing events. Promotes constitutive and exonic splicing enhancer (ESE)-dependent splicing activation by bridging together sequence-specific (SR family proteins, SFRS4, SFRS5 and TRA2B/SFRS10) and basal snRNP (SNRP70 and SNRPA1) factors of the spliceosome. Stimulates mRNA 3'-end cleavage independently of the formation of an exon junction complex. Binds both pre-mRNA and spliced mRNA 20-25 nt upstream of exon-exon junctions. Binds RNA and DNA with low sequence specificity and has similar preference for either double- or single-stranded nucleic acid substrates. This Mus musculus (Mouse) protein is Serine/arginine repetitive matrix protein 1 (Srrm1).